The sequence spans 42 residues: Potassium channel toxin gamma-KTx 1.4 (42 aa).

Intrachain disulfides connect Cys5–Cys23, Cys11–Cys34, Cys20–Cys39, and Cys24–Cys41.

This sequence belongs to the ergtoxin family. Gamma-KTx 1 subfamily. Expressed by the venom gland.

It localises to the secreted. Its function is as follows. Blocks Kv11/ERG potassium channels. The chain is Potassium channel toxin gamma-KTx 1.4 from Centruroides sculpturatus (Arizona bark scorpion).